Here is a 392-residue protein sequence, read N- to C-terminus: Probable protein phosphatase 2C 22 (392 aa).

The interval 1-26 (MEETRGISDPENGSSSYGGKPPNPLS) is disordered. In terms of domain architecture, PPM-type phosphatase spans 89–356 (RSGAWSDIGS…DNVTAVVVCL (268 aa)). Mn(2+) is bound by residues Asp133, Gly134, Asp304, and Asp347.

The protein belongs to the PP2C family. Mg(2+) is required as a cofactor. Mn(2+) serves as cofactor.

The catalysed reaction is O-phospho-L-seryl-[protein] + H2O = L-seryl-[protein] + phosphate. It catalyses the reaction O-phospho-L-threonyl-[protein] + H2O = L-threonyl-[protein] + phosphate. The protein is Probable protein phosphatase 2C 22 of Arabidopsis thaliana (Mouse-ear cress).